Reading from the N-terminus, the 273-residue chain is Shikimate dehydrogenase (NADP(+)) (273 aa).

Residues 14 to 16 and threonine 61 each bind shikimate; that span reads SKS. Lysine 65 acts as the Proton acceptor in catalysis. Residue glutamate 77 coordinates NADP(+). Residues asparagine 86 and aspartate 102 each coordinate shikimate. NADP(+) is bound by residues 126 to 130, 150 to 155, and methionine 213; these read GAGGA and NRTYEK. Tyrosine 215 contacts shikimate. Glycine 237 lines the NADP(+) pocket.

Belongs to the shikimate dehydrogenase family. Homodimer.

The catalysed reaction is shikimate + NADP(+) = 3-dehydroshikimate + NADPH + H(+). Its pathway is metabolic intermediate biosynthesis; chorismate biosynthesis; chorismate from D-erythrose 4-phosphate and phosphoenolpyruvate: step 4/7. Involved in the biosynthesis of the chorismate, which leads to the biosynthesis of aromatic amino acids. Catalyzes the reversible NADPH linked reduction of 3-dehydroshikimate (DHSA) to yield shikimate (SA). This Aliivibrio fischeri (strain MJ11) (Vibrio fischeri) protein is Shikimate dehydrogenase (NADP(+)).